Reading from the N-terminus, the 552-residue chain is Urocanate hydratase (552 aa).

NAD(+)-binding positions include Gly49–Gly50, Gln127, Gly173–Gly175, Asp193, Asn239–Ala240, Gln260–His264, Tyr270–Ile271, and Tyr319. Residue Cys407 is part of the active site. Gly489 contributes to the NAD(+) binding site.

It belongs to the urocanase family. It depends on NAD(+) as a cofactor.

It is found in the cytoplasm. It catalyses the reaction 4-imidazolone-5-propanoate = trans-urocanate + H2O. It functions in the pathway amino-acid degradation; L-histidine degradation into L-glutamate; N-formimidoyl-L-glutamate from L-histidine: step 2/3. Its function is as follows. Catalyzes the conversion of urocanate to 4-imidazolone-5-propionate. This is Urocanate hydratase from Bacillus cereus (strain 03BB102).